The following is a 348-amino-acid chain: Dihydroorotase (348 aa).

H17 and H19 together coordinate Zn(2+). Residues 19 to 21 and N45 each bind substrate; that span reads HLR. Zn(2+) contacts are provided by K103, H140, and H178. Position 103 is an N6-carboxylysine (K103). H140 serves as a coordination point for substrate. Residue L223 coordinates substrate. D251 serves as a coordination point for Zn(2+). Residue D251 is part of the active site. 2 residues coordinate substrate: H255 and A267.

It belongs to the metallo-dependent hydrolases superfamily. DHOase family. Class II DHOase subfamily. Homodimer. The cofactor is Zn(2+).

The enzyme catalyses (S)-dihydroorotate + H2O = N-carbamoyl-L-aspartate + H(+). It participates in pyrimidine metabolism; UMP biosynthesis via de novo pathway; (S)-dihydroorotate from bicarbonate: step 3/3. Functionally, catalyzes the reversible cyclization of carbamoyl aspartate to dihydroorotate. The polypeptide is Dihydroorotase (Klebsiella pneumoniae (strain 342)).